Here is a 472-residue protein sequence, read N- to C-terminus: 2-oxoglutarate carboxylase small subunit (472 aa).

The Biotin carboxylation domain occupies 1–445 (MFKKVLVANR…TTRYLEEHPH (445 aa)). Positions 115 and 199 each coordinate ATP. The ATP-grasp domain occupies 119-316 (KEVMKRAGVP…IVKWQIRIAA (198 aa)). Arg291 is a catalytic residue.

As to quaternary structure, heterohexadecamer of 8 large subunits and 8 small subunits. Mg(2+) serves as cofactor. Mn(2+) is required as a cofactor. The cofactor is Co(2+).

The catalysed reaction is hydrogencarbonate + 2-oxoglutarate + ATP = (S)-oxalosuccinate + ADP + phosphate + H(+). The protein is 2-oxoglutarate carboxylase small subunit of Hydrogenobacter thermophilus (strain DSM 6534 / IAM 12695 / TK-6).